The sequence spans 255 residues: Hydroxyacylglutathione hydrolase (255 aa).

Zn(2+) contacts are provided by His56, His58, Asp60, His61, His114, Asp133, and His171.

This sequence belongs to the metallo-beta-lactamase superfamily. Glyoxalase II family. Monomer. The cofactor is Zn(2+).

The catalysed reaction is an S-(2-hydroxyacyl)glutathione + H2O = a 2-hydroxy carboxylate + glutathione + H(+). The protein operates within secondary metabolite metabolism; methylglyoxal degradation; (R)-lactate from methylglyoxal: step 2/2. Its function is as follows. Thiolesterase that catalyzes the hydrolysis of S-D-lactoyl-glutathione to form glutathione and D-lactic acid. The chain is Hydroxyacylglutathione hydrolase from Rhodopseudomonas palustris (strain ATCC BAA-98 / CGA009).